The chain runs to 344 residues: Trace amine-associated receptor 8c (344 aa).

At 1-36 the chain is on the extracellular side; sequence MTSNFSQATLQLCYENVNASCIKTPYSPGLRVLLYM. 2 N-linked (GlcNAc...) asparagine glycosylation sites follow: asparagine 4 and asparagine 18. Intrachain disulfides connect cysteine 21–cysteine 185 and cysteine 96–cysteine 189. A helical transmembrane segment spans residues 37 to 57; it reads VFGFGAVLAVCGNLLVVISVL. Residues 58–67 lie on the Cytoplasmic side of the membrane; the sequence is HFKQLHSPAN. A helical membrane pass occupies residues 68 to 88; that stretch reads FLIASLASADFLVGISVMPFS. Residues 89-102 are Extracellular-facing; sequence MVRSIESCWYFGDT. Residues 103-127 traverse the membrane as a helical segment; it reads FCSLHSCCDVAFCYSSALHLCFISV. At 128 to 146 the chain is on the cytoplasmic side; the sequence is DRYIAVTDPLVYPTKFTVS. Residues 147–167 traverse the membrane as a helical segment; the sequence is VSGICISISWILPLVYSSAVF. The Extracellular portion of the chain corresponds to 168 to 196; sequence YTGISAMGIENLVSALNCVGGCQVVVNQD. A helical membrane pass occupies residues 197–217; that stretch reads WVLISFLLFFIPTLVMIILYS. Over 218–260 the chain is Cytoplasmic; that stretch reads KIFLVAKQQAVKIETSVSGSKGESSLESHKARVAKRERKAAKT. A helical transmembrane segment spans residues 261 to 281; sequence LGVTVLAFIVSWLPYTIDTLI. The Extracellular portion of the chain corresponds to 282–295; it reads DAFMGFITPAYVYE. Residues 296–319 traverse the membrane as a helical segment; it reads FCCWSAYYNSAMNPLIYAFFYPWF. The Cytoplasmic portion of the chain corresponds to 320-344; it reads RKAMKLILSGKILKGHSSTTSLFSE.

The protein belongs to the G-protein coupled receptor 1 family.

Its subcellular location is the cell membrane. Olfactory receptor activated by trace amines, such as N-methylpiperidine and N,N-dimethylcyclohexylamine. Trace amine compounds are enriched in animal body fluids and act on trace amine-associated receptors (TAARs) to elicit both intraspecific and interspecific innate behaviors. Ligand-binding causes a conformation change that triggers signaling via G(s)-class of G alpha proteins (GNAL or GNAS). In Rattus norvegicus (Rat), this protein is Trace amine-associated receptor 8c.